Here is a 140-residue protein sequence, read N- to C-terminus: Putative pre-16S rRNA nuclease (140 aa).

This sequence belongs to the YqgF nuclease family.

It is found in the cytoplasm. Could be a nuclease involved in processing of the 5'-end of pre-16S rRNA. This chain is Putative pre-16S rRNA nuclease, found in Aeromonas salmonicida (strain A449).